The primary structure comprises 452 residues: Transcription factor ETV6 (452 aa).

Lys-11 carries the post-translational modification N6-acetyllysine; alternate. Lys-11 is covalently cross-linked (Glycyl lysine isopeptide (Lys-Gly) (interchain with G-Cter in SUMO2); alternate). The residue at position 18 (Thr-18) is a Phosphothreonine. At Ser-22 the chain carries Phosphoserine. A PNT domain is found at 40–124 (ALRMEEDSIR…ELLQHILKQR (85 aa)). The tract at residues 154 to 262 (EDNGVQRTSR…PRPSSPRQEG (109 aa)) is disordered. Residues 158-174 (VQRTSRPSAENVHQNPP) are compositionally biased toward polar residues. 3 positions are modified to phosphoserine: Ser-213, Ser-238, and Ser-257. Lys-288 is covalently cross-linked (Glycyl lysine isopeptide (Lys-Gly) (interchain with G-Cter in SUMO2)). Residue Lys-302 is modified to N6-acetyllysine; alternate. Lys-302 participates in a covalent cross-link: Glycyl lysine isopeptide (Lys-Gly) (interchain with G-Cter in SUMO2); alternate. At Ser-323 the chain carries Phosphoserine. A DNA-binding region (ETS) is located at residues 339–420 (RLLWDYVYQL…PGQRLLFRFM (82 aa)). Glycyl lysine isopeptide (Lys-Gly) (interchain with G-Cter in SUMO2) cross-links involve residues Lys-403 and Lys-421.

Belongs to the ETS family. In terms of assembly, can form homodimers or heterodimers with TEL2 or FLI1. Interacts with L3MBTL1 and HDAC9.

The protein resides in the nucleus. Transcriptional repressor; binds to the DNA sequence 5'-CCGGAAGT-3'. Plays a role in hematopoiesis and malignant transformation. In Bos taurus (Bovine), this protein is Transcription factor ETV6 (ETV6).